Here is a 508-residue protein sequence, read N- to C-terminus: Lysine--tRNA ligase (508 aa).

Residues glutamate 418 and glutamate 425 each contribute to the Mg(2+) site.

The protein belongs to the class-II aminoacyl-tRNA synthetase family. As to quaternary structure, homodimer. It depends on Mg(2+) as a cofactor.

The protein resides in the cytoplasm. It catalyses the reaction tRNA(Lys) + L-lysine + ATP = L-lysyl-tRNA(Lys) + AMP + diphosphate. This is Lysine--tRNA ligase from Burkholderia pseudomallei (strain K96243).